We begin with the raw amino-acid sequence, 259 residues long: NAD kinase (259 aa).

D49 serves as the catalytic Proton acceptor. NAD(+)-binding positions include D49 to G50, R54, N118 to E119, D148, A156, T159 to S164, and A183.

It belongs to the NAD kinase family. The cofactor is a divalent metal cation.

It is found in the cytoplasm. The catalysed reaction is NAD(+) + ATP = ADP + NADP(+) + H(+). Involved in the regulation of the intracellular balance of NAD and NADP, and is a key enzyme in the biosynthesis of NADP. Catalyzes specifically the phosphorylation on 2'-hydroxyl of the adenosine moiety of NAD to yield NADP. The chain is NAD kinase from Xylella fastidiosa (strain 9a5c).